The primary structure comprises 216 residues: Pentapeptide repeat protein VPA0095 (216 aa).

It belongs to the pentapeptide repeat protein family.

Functionally, has no effect when overexpressed in E.coli. When Cys-115 is mutated to Tyr and overexpressed it increases (fluoro)quinolone resistance in E.coli up to 16-fold for ciprofloxacin, levofloxacin and nalidixic acid. The sequence is that of Pentapeptide repeat protein VPA0095 from Vibrio parahaemolyticus serotype O3:K6 (strain RIMD 2210633).